We begin with the raw amino-acid sequence, 1024 residues long: MERRSRRKSRRNGRSTAGKAAATQPAKSPGAQLWLFPSAAGLHRALLRRVEVTRQLCCSPGRLAVLERGGAGVQVHQLLAGSGGARTPKCIKLGKNMKIHSVDQGAEHMLILSSDGKPFEYDNYSMKHLRFESILQEKKIIQITCGDYHSLALSKGGELFAWGQNLHGQLGVGRKFPSTTTPQIVEHLAGVPLAQISAGEAHSMALSMSGNIYSWGKNECGQLGLGHTESKDDPSLIEGLDNQKVEFVACGGSHSALLTQDGLLFTFGAGKHGQLGHNSTQNELRPCLVAELVGYRVTQIACGRWHTLAYVSDLGKVFSFGSGKDGQLGNGGTRDQLMPLPVKVSSSEELKLESHTSEKELIMIAGGNQSILLWIKKENSYVNLKRTIPTLNEGTVKRWIADVETKRWQSTKREIQEIFSSPACLTGSFLRKRRTTEMMPVYLDLNKARNIFKELTQKDWITNMITTCLKDNLLKRLPFHSPPQEALEIFFLLPECPMMHISNNWESLVVPFAKVVCKMSDQSSLVLEEYWATLQESTFSKLVQMFKTAVICQLDYWDESAEENGNVQALLEMLKKLHRVNQVKCQLPESIFQVDELLHRLNFFVEVCRRYLWKMTVDASENVQCCVIFSHFPFIFNNLSKIKLLHTDTLLKIESKKHKAYLRSAAIEEERESEFALRPTFDLTVRRNHLIEDVLNQLSQFENEDLRKELWVSFSGEIGYDLGGVKKEFFYCLFAEMIQPEYGMFMYPEGASCMWFPVKPKFEKKRYFFFGVLCGLSLFNCNVANLPFPLALFKKLLDQMPSLEDLKELSPDLGKNLQTLLDDEGDNFEEVFYIHFNVHWDRNDTNLIPNGSSITVNQTNKRDYVSKYINYIFNDSVKAVYEEFRRGFYKMCDEDIIKLFHPEELKDVIVGNTDYDWKTFEKNARYEPGYNSSHPTIVMFWKAFHKLTLEEKKKFLVFLTGTDRLQMKDLNNMKITFCCPESWNERDPIRALTCFSVLFLPKYSTMETVEEALQEAINNNRGFG.

The span at 1–13 (MERRSRRKSRRNG) shows a compositional bias: basic residues. The disordered stretch occupies residues 1–28 (MERRSRRKSRRNGRSTAGKAAATQPAKS). 5 RCC1 repeats span residues 96–155 (NMKI…ALSK), 156–208 (GGEL…ALSM), 209–260 (SGNI…LLTQ), 262–312 (GLLF…AYVS), and 314–364 (LGKV…LIMI). The HECT domain maps to 702 to 1024 (ENEDLRKELW…EAINNNRGFG (323 aa)). The active-site Glycyl thioester intermediate is cysteine 994.

In terms of assembly, (Microbial infection) Interacts with human cytomegalovirus protein UL26; this interaction inhibits global protein ISGylation. As to quaternary structure, (Microbial infection) Interacts with Kaposi's sarcoma-associated herpesvirus protein v-IRF1; this interaction inhibits global protein ISGylation. Binds to CCNA1, CCNB1, CCND1 and CCNE1. Interacts with UBE2L6. Interacts with IRF3, this interaction is marginal in resting cells but enhanced upon viral infection. Interacts with influenza A virus NS1. Post-translationally, ISGylated. In terms of tissue distribution, expressed in testis and to a lesser degree in brain, ovary and placenta. Found in most tissues at low levels.

It is found in the cytoplasm. The protein localises to the perinuclear region. Functionally, major E3 ligase for ISG15 conjugation. Acts as a positive regulator of innate antiviral response in cells induced by interferon. Functions as part of the ISGylation machinery that recognizes target proteins in a broad and relatively non-specific manner. Catalyzes ISGylation of IRF3 which results in sustained activation, it attenuates IRF3-PIN1 interaction, which antagonizes IRF3 ubiquitination and degradation, and boosts the antiviral response. Mediates ISGylation of the phosphatase PTEN leading to its degradation, thus alleviating its suppression of the PI3K-AKT signaling pathway and promoting the production of cytokines that facilitate bacterial clearance. Interferes with the function of key viral structural proteins such as ebolavirus structural protein VP40 or HIV-1 protein GAG. Catalyzes ISGylation of influenza A viral NS1 which attenuates virulence; ISGylated NS1 fails to form homodimers and thus to interact with its RNA targets. Catalyzes ISGylation of papillomavirus type 16 L1 protein which results in dominant-negative effect on virus infectivity. Physically associated with polyribosomes, broadly modifies newly synthesized proteins in a cotranslational manner. In an interferon-stimulated cell, newly translated viral proteins are primary targets of ISG15. Promotes parkin/PRKN ubiquitin E3 ligase activity by suppressing the intramolecular interaction that maintains its autoinhibited conformation. Its function is as follows. (Microbial infection) Functions as an E3 ligase for ISGylation of hepatitis B virus protein X leading to enhanced viral replication due to increased interferon resistance. The sequence is that of E3 ISG15--protein ligase HERC5 (HERC5) from Homo sapiens (Human).